A 750-amino-acid chain; its full sequence is Rho GTPase-activating protein 9 (750 aa).

An SH3 domain is found at 22–88 (PRGSQLCALY…PAAYMIEESI (67 aa)). Disordered regions lie at residues 120–187 (ALPS…LMSE) and 242–319 (WKPP…LLDD). The span at 163-180 (RSLSQEDLPSEASASTAG) shows a compositional bias: polar residues. Residues 213 to 247 (LQRLDAWEQHLDPNSGRCFYINSLTGCKSWKPPRR) form the WW domain. 2 stretches are compositionally biased toward polar residues: residues 251–270 (ETNP…NDVL) and 291–300 (GSLSLSQRTS). Residues 301–317 (QLDPPALQAPRPLPQLL) are compositionally biased toward low complexity. Residues 322–435 (EVEKSGLLNM…WHRALRTVIE (114 aa)) form the PH domain. Lipid binding regions lie at residues 342-345 (RKNW), 397-399 (SSR), and 432-669 (TVIE…CLSQ). Residues 446–462 (EAPTGRDQGSGDRENPL) show a composition bias toward basic and acidic residues. Residues 446–488 (EAPTGRDQGSGDRENPLELRLSGSGPAELSAGEDEEEESELVS) are disordered. Serine 475 bears the Phosphoserine mark. The span at 476-485 (AGEDEEEESE) shows a compositional bias: acidic residues. The residue at position 500 (serine 500) is a Phosphoserine. One can recognise a Rho-GAP domain in the interval 542-749 (CQLESLCQRE…LMLTNFTSLF (208 aa)).

As to quaternary structure, interacts with FASLG. As to expression, predominantly expressed in peripheral blood leukocytes, spleen, and thymus.

In terms of biological role, GTPase activator for the Rho-type GTPases by converting them to an inactive GDP-bound state. Has a substantial GAP activity toward CDC42 and RAC1 and less toward RHOA. Has a role in regulating adhesion of hematopoietic cells to the extracellular matrix. Binds phosphoinositides, and has the highest affinity for phosphatidylinositol 3,4,5-trisphosphate, followed by phosphatidylinositol 3,4-bisphosphate and phosphatidylinositol 4,5-bisphosphate. In Homo sapiens (Human), this protein is Rho GTPase-activating protein 9 (ARHGAP9).